A 263-amino-acid polypeptide reads, in one-letter code: MARGPKKHLKRVAAPKHWMLDKLTGVFAPRPSTGPHKLRECLPLIVFLRNRLKYALTGDEVKKICMQRFIKIDGKVRVDVTYPAGFMDVISIEKTGEHFRLVYDTKGRFAVHRITVEEAKYKLCKVRKITVGVKGIPHLVTHDARTIRYPDPVIKVNDTVQIDLGTGKIINFIKFDTGNLCMVIGGANLGRVGVITNRERHPGSFDVVHVKDANGNSFATRLSNIFVIGNGNKPWISLPRGKGIRLTVAEERDKRLATKQSSG.

One can recognise an S4 RNA-binding domain in the interval 42 to 104 (LPLIVFLRNR…TGEHFRLVYD (63 aa)).

The protein belongs to the eukaryotic ribosomal protein eS4 family.

The chain is Small ribosomal subunit protein eS4, Y isoform 1 (RPS4Y1) from Homo sapiens (Human).